Consider the following 119-residue polypeptide: Holo-[acyl-carrier-protein] synthase (119 aa).

Mg(2+) is bound by residues Asp8 and Glu58.

It belongs to the P-Pant transferase superfamily. AcpS family. Mg(2+) serves as cofactor.

Its subcellular location is the cytoplasm. It carries out the reaction apo-[ACP] + CoA = holo-[ACP] + adenosine 3',5'-bisphosphate + H(+). Functionally, transfers the 4'-phosphopantetheine moiety from coenzyme A to a Ser of acyl-carrier-protein. This chain is Holo-[acyl-carrier-protein] synthase, found in Bacillus cereus (strain B4264).